The sequence spans 465 residues: Kinesin-like protein KIN-1 (465 aa).

The Kinesin motor domain occupies 3 to 334 (NVTVCARFRP…LRFGMRAKHI (332 aa)). Position 87-94 (87-94 (GQTGAGKT)) interacts with ATP. Positions 338–358 (PRASEVKSAKAQEEPSSVTKD) are disordered. Over residues 341-358 (SEVKSAKAQEEPSSVTKD) the composition is skewed to basic and acidic residues. Residues 402–444 (VYEDIVSKTIQSLQQAVDELQQKVKKLEAENIGIQEQALRNHE) adopt a coiled-coil conformation.

The protein belongs to the TRAFAC class myosin-kinesin ATPase superfamily. Kinesin family. KIN-1 subfamily. Homodimer. Interacts with WIP1 and WIP2. As to expression, specifically expressed in ovules and anthers.

Kinesin-like motor protein that promotes synapsis and is required for proper crossover distribution in meiosis. Plays a role in the nuclear division cycles during megagametogenesis. The polypeptide is Kinesin-like protein KIN-1 (Arabidopsis thaliana (Mouse-ear cress)).